The primary structure comprises 452 residues: MDGTIKEALSVVSDDQSLFDSAYGAAAHLPKADMTASGSPDYGQPHKINPLPPQQEWINQPVRVNVKREYDHMNGSRESPVDCSVSKCSKLVGGGESNPMNYNSYMDEKNGPPPPNMTTNERRVIVPADPTLWTQEHVRQWLEWAIKEYSLMEIDTSFFQNMDGKELCKMNKEDFLRATTLYNTEVLLSHLSYLRESSLLAYNTTSHTDQSSRLSVKEDPSYDSVRRGAWGNNMNSGLNKSPPLGGAQTISKNTEQRPQPDPYQILGPTSSRLANPGSGQIQLWQFLLELLSDSANASCITWEGTNGEFKMTDPDEVARRWGERKSKPNMNYDKLSRALRYYYDKNIMTKVHGKRYAYKFDFHGIAQALQPHPTESSMYKYPSDISYMPSYHAHQQKVNFVPPHPSSMPVTSSSFFGAASQYWTSPTGGIYPNPNVPRHPNTHVPSHLGSYY.

Residue S39 is modified to Phosphoserine. Residues 112–198 (PPPPNMTTNE…SHLSYLRESS (87 aa)) enclose the PNT domain. Residues 209 to 271 (DQSSRLSVKE…PYQILGPTSS (63 aa)) are disordered. A compositionally biased stretch (basic and acidic residues) spans 215 to 226 (SVKEDPSYDSVR). The span at 248 to 257 (QTISKNTEQR) shows a compositional bias: polar residues. The segment at residues 281–361 (IQLWQFLLEL…HGKRYAYKFD (81 aa)) is a DNA-binding region (ETS). The tract at residues 433–452 (NPNVPRHPNTHVPSHLGSYY) is disordered.

This sequence belongs to the ETS family. Can form homodimers or heterodimers with ETV6/TEL1.

The protein localises to the nucleus. Its function is as follows. Sequence-specific transcriptional activator. Recognizes the DNA sequence 5'-C[CA]GGAAGT-3'. The polypeptide is Friend leukemia integration 1 transcription factor (FLI1) (Homo sapiens (Human)).